A 313-amino-acid chain; its full sequence is MNTFSQVWVFSDTPSRLPELMNGAQALANQINTFVLNDADGVQAIQLGANHVWKLNGKPDDRMIEDYAGVMADTIRQHGADGLVLLPNTRRGKLLAAKLGYRLKAAVSNDASTVSVQDGKATVKHMVYGGLAIGEERIATPYAVLTISSGTFDAAQPDASRTGETHTVEWQAPAVAITRTATQARQSNSVDLDKARLVVSVGRGIGSKENIALAEQLCKAIGAELACSRPVAENEKWMEHERYVGISNLMLKPELYLAVGISGQIQHMVGANASQTIFAINKDKNAPIFQYADYGIVGDAVKILPALTAALAR.

Residue 255-283 (LYLAVGISGQIQHMVGANASQTIFAINKD) coordinates FAD.

This sequence belongs to the ETF alpha-subunit/FixB family. As to quaternary structure, heterodimer of FixA and FixB.

It functions in the pathway amine and polyamine metabolism; carnitine metabolism. Required for anaerobic carnitine reduction. May bring reductant to CaiA. In Escherichia coli O8 (strain IAI1), this protein is Protein FixB.